A 901-amino-acid polypeptide reads, in one-letter code: Protein translocase subunit SecA (901 aa).

ATP-binding positions include Q87, 105–109 (GEGKT), and D512. The interval 852–901 (AQMQQLSHQSDDEAAAQDLAAQTGERKVGRNDPCPCGSGKKYKQCHGRLS) is disordered. The Zn(2+) site is built by C885, C887, C896, and H897. A compositionally biased stretch (basic residues) spans 891–901 (KKYKQCHGRLS).

The protein belongs to the SecA family. In terms of assembly, monomer and homodimer. Part of the essential Sec protein translocation apparatus which comprises SecA, SecYEG and auxiliary proteins SecDF-YajC and YidC. It depends on Zn(2+) as a cofactor.

It localises to the cell inner membrane. Its subcellular location is the cytoplasm. It catalyses the reaction ATP + H2O + cellular proteinSide 1 = ADP + phosphate + cellular proteinSide 2.. In terms of biological role, part of the Sec protein translocase complex. Interacts with the SecYEG preprotein conducting channel. Has a central role in coupling the hydrolysis of ATP to the transfer of proteins into and across the cell membrane, serving both as a receptor for the preprotein-SecB complex and as an ATP-driven molecular motor driving the stepwise translocation of polypeptide chains across the membrane. This is Protein translocase subunit SecA from Klebsiella pneumoniae subsp. pneumoniae (strain ATCC 700721 / MGH 78578).